The following is a 324-amino-acid chain: 2-dehydro-3-deoxygluconokinase (324 aa).

Substrate-binding positions include 35–39 (GAESN), 106–108 (YYR), and Arg-170. ATP is bound by residues 168–170 (NVR), 228–233 (KLGKEG), and 258–261 (GAGD). Residues Asp-261 and Asp-297 each contribute to the substrate site. The active-site Proton acceptor is the Asp-261.

It belongs to the carbohydrate kinase PfkB family.

It carries out the reaction 2-dehydro-3-deoxy-D-gluconate + ATP = 2-dehydro-3-deoxy-6-phospho-D-gluconate + ADP + H(+). It participates in carbohydrate acid metabolism; 2-dehydro-3-deoxy-D-gluconate degradation; D-glyceraldehyde 3-phosphate and pyruvate from 2-dehydro-3-deoxy-D-gluconate: step 1/2. Functionally, catalyzes the phosphorylation of 2-keto-3-deoxygluconate (KDG) to produce 2-keto-3-deoxy-6-phosphogluconate (KDPG). The sequence is that of 2-dehydro-3-deoxygluconokinase (kdgK) from Bacillus subtilis (strain 168).